Here is a 321-residue protein sequence, read N- to C-terminus: Inner membrane protein YtfF (321 aa).

The Cytoplasmic segment spans residues 1–4 (MISG). A helical membrane pass occupies residues 5 to 25 (VLYALLAGLMWGLIFVGPLIV). Positions 13-141 (LMWGLIFVGP…IGIGLACVNI (129 aa)) constitute an EamA domain. The Periplasmic portion of the chain corresponds to 26-30 (PEYPA). The chain crosses the membrane as a helical span at residues 31-51 (MLQSMGRYLALGLIALPIAWL). Residues 52–65 (GRVRLRQLARRDWL) are Cytoplasmic-facing. A helical transmembrane segment spans residues 66-86 (TALMLTMMGNLIYYFCLASAI). Over 87–92 (QRTGAP) the chain is Periplasmic. A helical membrane pass occupies residues 93–113 (VSTMIIGTLPVVIPVFANLLY). At 114 to 120 (SQRDGKL) the chain is on the cytoplasmic side. The helical transmembrane segment at 121-141 (AWGKLAPALICIGIGLACVNI) threads the bilayer. Over 142–154 (AELNHGLPDFDWA) the chain is Periplasmic. The chain crosses the membrane as a helical span at residues 155–175 (RYTSGIVLALVSVVCWAWYAL). At 176 to 194 (RNARWLRENPDKHPMMWAT) the chain is on the cytoplasmic side. The chain crosses the membrane as a helical span at residues 195-215 (AQALVTLPVSLIGYLVACYWL). The Periplasmic segment spans residues 216 to 230 (NTQTPDFSLPFGPRP). The helical transmembrane segment at 231–251 (LVFISLMVAIAVLCSWVGALC) threads the bilayer. At 252–261 (WNVASQLLPT) the chain is on the cytoplasmic side. The chain crosses the membrane as a helical span at residues 262–282 (VILGPLIVFETLAGLLYTFLL). The Periplasmic portion of the chain corresponds to 283-285 (RQQ). Residues 286–306 (MPPLMTLSGIALLVIGVVIAV) form a helical membrane-spanning segment. The Cytoplasmic segment spans residues 307 to 321 (RAKPEKPLTESVSES).

The protein resides in the cell inner membrane. The protein is Inner membrane protein YtfF (ytfF) of Escherichia coli (strain K12).